The following is a 266-amino-acid chain: Biotin--[acetyl-CoA-carboxylase] ligase (266 aa).

One can recognise a BPL/LPL catalytic domain in the interval 14 to 202 (RSLRDQLIGA…ELEARIIQWR (189 aa)). Biotin is bound by residues 38 to 39 (ST), glutamine 63, arginine 67, and lysine 138.

It belongs to the biotin--protein ligase family. In terms of assembly, monomer in solution. Forms dimers under specific crystallization conditions.

The catalysed reaction is biotin + L-lysyl-[protein] + ATP = N(6)-biotinyl-L-lysyl-[protein] + AMP + diphosphate + H(+). The enzyme catalyses biotin + ATP + H(+) = biotinyl-5'-AMP + diphosphate. It carries out the reaction biotinyl-5'-AMP + L-lysyl-[protein] = N(6)-biotinyl-L-lysyl-[protein] + AMP + 2 H(+). With respect to regulation, binding of biotin and ATP significantly increases the thermal stability of BirA and leads to the formation of a high affinity holoenzyme complex. In terms of biological role, catalyzes the transfer of biotin onto a conserved lysine residue of the biotin carboxyl carrier protein (BCCP) domain of acetyl-CoA carboxylase and converts it to active holo-BCCP. Forms an acyl-adenylate intermediate. Cannot use GTP or desthiobiotin. This is Biotin--[acetyl-CoA-carboxylase] ligase from Mycobacterium tuberculosis (strain ATCC 25618 / H37Rv).